Reading from the N-terminus, the 260-residue chain is Isoprenyl transferase (260 aa).

The active site involves Asp40. Residue Asp40 participates in Mg(2+) binding. Substrate-binding positions include 41 to 44, Trp45, Arg53, His57, and 85 to 87; these read GNGR and STE. Asn88 functions as the Proton acceptor in the catalytic mechanism. Substrate is bound by residues Trp89, Arg91, Arg208, and 214-216; that span reads RLS. Glu227 is a Mg(2+) binding site.

The protein belongs to the UPP synthase family. In terms of assembly, homodimer. It depends on Mg(2+) as a cofactor.

Functionally, catalyzes the condensation of isopentenyl diphosphate (IPP) with allylic pyrophosphates generating different type of terpenoids. The polypeptide is Isoprenyl transferase (Bacillus subtilis (strain 168)).